Here is a 596-residue protein sequence, read N- to C-terminus: Pentatricopeptide repeat-containing protein At1g50270 (596 aa).

PPR repeat units lie at residues 66–102 (SIQLWDSLIGHFSGGITLNRRLSFLAYRHMRRNGVIP), 103–136 (SRHTFPPLLKAVFKLRDSNPFQFHAHIVKFGLDS), 137–167 (DPFVRNSLISGYSSSGLFDFASRLFDGAEDK), 168–202 (DVVTWTAMIDGFVRNGSASEAMVYFVEMKKTGVAA), 203–237 (NEMTVVSVLKAAGKVEDVRFGRSVHGLYLETGRVK), 239–269 (DVFIGSSLVDMYGKCSCYDDAQKVFDEMPSR), 270–304 (NVVTWTALIAGYVQSRCFDKGMLVFEEMLKSDVAP), 305–339 (NEKTLSSVLSACAHVGALHRGRRVHCYMIKNSIEI), 340–370 (NTTAGTTLIDLYVKCGCLEEAILVFERLHEK), 371–405 (NVYTWTAMINGFAAHGYARDAFDLFYTMLSSHVSP), 406–436 (NEVTFMAVLSACAHGGLVEEGRRLFLSMKGR), and 442–472 (KADHYACMVDLFGRKGLLEEAKALIERMPME). The type E motif stretch occupies residues 477–552 (VWGALFGSCL…SPGFSWIEVK (76 aa)). A type E(+) motif region spans residues 553 to 584 (GKLCEFIAFDDKKPLESDDLYKTLDTVGVQMR).

The protein belongs to the PPR family. PCMP-E subfamily.

The sequence is that of Pentatricopeptide repeat-containing protein At1g50270 (PCMP-E42) from Arabidopsis thaliana (Mouse-ear cress).